The chain runs to 227 residues: tRNA (guanine-N(1)-)-methyltransferase (227 aa).

S-adenosyl-L-methionine is bound by residues glycine 110 and 129–134; that span reads IGDYVL.

The protein belongs to the RNA methyltransferase TrmD family. Homodimer.

It is found in the cytoplasm. The catalysed reaction is guanosine(37) in tRNA + S-adenosyl-L-methionine = N(1)-methylguanosine(37) in tRNA + S-adenosyl-L-homocysteine + H(+). In terms of biological role, specifically methylates guanosine-37 in various tRNAs. This is tRNA (guanine-N(1)-)-methyltransferase from Mycoplasmopsis synoviae (strain 53) (Mycoplasma synoviae).